We begin with the raw amino-acid sequence, 509 residues long: Dihydrolipoyl dehydrogenase, mitochondrial (509 aa).

Residues 1–35 (MQSWSRVYCSLAKRGHFNRISHGLQGLSAVPLRTY) constitute a mitochondrion transit peptide. The residue at position 66 (lysine 66) is an N6-acetyllysine; alternate. Lysine 66 is subject to N6-succinyllysine; alternate. Residues 71-80 (EKNETLGGTC) and lysine 89 each bind FAD. Cysteine 80 and cysteine 85 are joined by a disulfide. 4 positions are modified to N6-acetyllysine; alternate: lysine 104, lysine 122, lysine 132, and lysine 143. Residues lysine 104, lysine 122, lysine 132, and lysine 143 each carry the N6-succinyllysine; alternate modification. Glycine 154 contributes to the FAD binding site. 2 positions are modified to N6-succinyllysine: lysine 159 and lysine 166. Residue 183 to 185 (TGS) participates in FAD binding. NAD(+)-binding positions include 220–227 (GAGVIGVE) and glutamate 243. An N6-succinyllysine mark is found at lysine 273 and lysine 277. An NAD(+)-binding site is contributed by valine 278. 2 positions are modified to phosphoserine: serine 285 and serine 297. Glycine 314 is an NAD(+) binding site. Lysine 346 is modified (N6-acetyllysine). FAD contacts are provided by residues aspartate 355 and 361-364 (MLAH). Lysine 410 is modified (N6-acetyllysine; alternate). Lysine 410 is modified (N6-succinyllysine; alternate). Lysine 417 and lysine 420 each carry N6-acetyllysine. N6-succinyllysine is present on lysine 430. Histidine 487 serves as the catalytic Proton acceptor. Position 502 is a phosphoserine (serine 502). Lysine 505 bears the N6-acetyllysine; alternate mark. Position 505 is an N6-succinyllysine; alternate (lysine 505).

The protein belongs to the class-I pyridine nucleotide-disulfide oxidoreductase family. In terms of assembly, homodimer. Part of the multimeric pyruvate dehydrogenase complex that contains multiple copies of pyruvate dehydrogenase (subunits PDHA (PDHA1 or PDHA2) and PDHB, E1), dihydrolipoamide acetyltransferase (DLAT, E2) and lipoamide dehydrogenase (DLD, E3). These subunits are bound to an inner core composed of about 48 DLAT and 12 PDHX molecules (by non covalent bonds). The 2-oxoglutarate dehydrogenase complex is composed of OGDH (2-oxoglutarate dehydrogenase; E1), DLST (dihydrolipoamide succinyltransferase; E2), DLD (dihydrolipoamide dehydrogenase; E3) and the assembly factor KGD4. It contains multiple copies of the three enzymatic components (E1, E2 and E3). In the nucleus, the 2-oxoglutarate dehydrogenase complex associates with KAT2A. Interacts with PDHX. It depends on FAD as a cofactor. Tyrosine phosphorylated.

It is found in the mitochondrion matrix. The protein resides in the nucleus. Its subcellular location is the cell projection. The protein localises to the cilium. It localises to the flagellum. It is found in the cytoplasmic vesicle. The protein resides in the secretory vesicle. Its subcellular location is the acrosome. It carries out the reaction N(6)-[(R)-dihydrolipoyl]-L-lysyl-[protein] + NAD(+) = N(6)-[(R)-lipoyl]-L-lysyl-[protein] + NADH + H(+). Functionally, lipoamide dehydrogenase is a component of the glycine cleavage system as well as an E3 component of three alpha-ketoacid dehydrogenase complexes (pyruvate-, alpha-ketoglutarate-, and branched-chain amino acid-dehydrogenase complex). The 2-oxoglutarate dehydrogenase complex is mainly active in the mitochondrion. A fraction of the 2-oxoglutarate dehydrogenase complex also localizes in the nucleus and is required for lysine succinylation of histones: associates with KAT2A on chromatin and provides succinyl-CoA to histone succinyltransferase KAT2A. In monomeric form may have additional moonlighting function as serine protease. Involved in the hyperactivation of spermatazoa during capacitation and in the spermatazoal acrosome reaction. This chain is Dihydrolipoyl dehydrogenase, mitochondrial (DLD), found in Pongo abelii (Sumatran orangutan).